The primary structure comprises 182 residues: Gas vesicle protein H1 (182 aa).

Over residues 1 to 11 (MVPDENDDASD) the composition is skewed to acidic residues. Disordered stretches follow at residues 1–21 (MVPDENDDASDDQSSQLSGLL) and 65–106 (GRAD…GGTS). Residues 12–21 (DQSSQLSGLL) are compositionally biased toward low complexity. The segment covering 92–101 (TTEDSIHVET) has biased composition (basic and acidic residues).

It belongs to the gas vesicle GvpH family. As to quaternary structure, gvpF to GvpM interact with each other in vitro, and may form multi-subunit complex(es). Interacts with GvpC1. Might interact with GvpA1.

The protein localises to the cytoplasm. Its subcellular location is the gas vesicle. In terms of biological role, proteins GvpF to GvpM might be involved in nucleating gas vesicle formation. May be important for the stability of gas vesicles. Gas vesicles are hollow, gas filled proteinaceous nanostructures found in several microbial planktonic microorganisms. They allow positioning of halobacteria at the optimal depth for growth in the poorly aerated, shallow brine pools of their habitat. Expression of a 9.5 kb p-vac DNA fragment containing 2 divergently transcribed regions (gvpD-gvpE-gvpF-gvpG-gvpH-gvpI-gvpJ-gvpK-gvpL-gvpM and gvpA-gvpC-gvpN-gvpO) allows H.volcanii to produce gas vesicles. A similar region restores gas vesicle production in H.halobium without the p-vac locus, but it still has the c-vac locus. The sequence is that of Gas vesicle protein H1 (gvpH11) from Halobacterium salinarum (strain ATCC 700922 / JCM 11081 / NRC-1) (Halobacterium halobium).